Consider the following 700-residue polypeptide: Neoverrucotoxin subunit beta (700 aa).

The region spanning 506–700 (HMPGVETIKD…QKVNGQIKLL (195 aa)) is the B30.2/SPRY domain.

The protein belongs to the SNTX/VTX toxin family. In terms of assembly, heterodimer of alpha and beta subunits. Not glycosylated. In terms of processing, four intrachain disulfide linkages are present in the heterodimer. No interchain disulfide bound links the two subunits. In terms of tissue distribution, expressed by the venom gland.

Its subcellular location is the secreted. In terms of biological role, has hemolytic and lethal activities. Its hemolytic activity is inhibited by anionic lipids, especially potently by cardiolipin. This Synanceia verrucosa (Reef stonefish) protein is Neoverrucotoxin subunit beta.